The sequence spans 321 residues: Endochitinase 1 (321 aa).

Positions 1-21 are cleaved as a signal peptide; sequence MSFRALSVFSLFLSYLILGSA. A Chitin-binding type-1 domain is found at 22 to 64; it reads EQCGRQAGGALCPGGLCCSQFGWCGNTDDYCKKENGCQSQCSG. 7 disulfides stabilise this stretch: Cys-24–Cys-39, Cys-33–Cys-45, Cys-38–Cys-52, Cys-58–Cys-62, Cys-93–Cys-156, Cys-167–Cys-175, and Cys-274–Cys-306. Positions 65–98 are hinge; it reads SGGDTGGLDSLITRERFDQMLLHRNDGGCPARGF. The catalytic stretch occupies residues 99–321; the sequence is YTYDAFIAAA…YNNGPSVDSM (223 aa). Residue Glu-137 is the Proton donor of the active site.

It belongs to the glycosyl hydrolase 19 family. Chitinase class I subfamily.

The protein resides in the vacuole. The catalysed reaction is Random endo-hydrolysis of N-acetyl-beta-D-glucosaminide (1-&gt;4)-beta-linkages in chitin and chitodextrins.. Functionally, defense against chitin-containing fungal pathogens. The chain is Endochitinase 1 (CHIA1) from Theobroma cacao (Cacao).